Consider the following 556-residue polypeptide: MAASCGSSQLPAAEPPLKIPKMEVLSPGSPGALSDGNPSLSDPSTPSGASPLGPGPAAGGAGLGGGGAAGGRGGASPSVSFSPGGAAAAAAAAACRGMSWTPAETNALIAVWGNERLVEARYQQLEGAGTVFGSKAPGPAMYERVSRALAELGYERTPSQCRERIKTLRRCYSRVKEHGVGKRKSSYTFEQLEQVFGQGGWDSQPCQPVLINSSGLYQELESDGSTMEEYSQEDWGNHSQDLHCYQTGEQELDEMPTTKRTLKIKQESSEDAQKRDVMQNIMQILESVQLKWELFQSWTDFSRLHLSNKLAIFGIGYNTRWKEDIRYHYAEISSQVPLGKRLREYFNSEKPEGRVIMTRVQKMNWKNVYYKFLEITISEARCLELHMEIDWIPIAHSKPTGGNVVQYLLPGGIPKSPGLYAIGYEECHEKPRSPLAEPRGADPSNETPGELEVPSPQASLRVEMESARIIYCYLGIAEVRTLQQCLFLHFQANTKTFSKEWVGINAFLSQNCVVEPGVSPKSIYIKFVEVERDFLSAGSLVECLEKAIGYPLKFNN.

Composition is skewed to polar residues over residues methionine 1–leucine 10 and glycine 36–threonine 45. The disordered stretch occupies residues methionine 1–serine 82. Gly residues predominate over residues proline 56–glycine 74. One can recognise a Myb-like domain in the interval serine 99–arginine 169. A disordered region spans residues proline 431 to alanine 458.

In Gallus gallus (Chicken), this protein is Myb/SANT-like DNA-binding domain-containing protein 2 (MSANTD2).